The primary structure comprises 481 residues: Argininosuccinate lyase (481 aa).

The protein belongs to the lyase 1 family. Argininosuccinate lyase subfamily.

The protein resides in the cytoplasm. The enzyme catalyses 2-(N(omega)-L-arginino)succinate = fumarate + L-arginine. Its pathway is amino-acid biosynthesis; L-arginine biosynthesis; L-arginine from L-ornithine and carbamoyl phosphate: step 3/3. The polypeptide is Argininosuccinate lyase (Methanococcus maripaludis (strain C6 / ATCC BAA-1332)).